The chain runs to 33 residues: ETLSSARFRCKPNSEWRTQIPLFPQEVEACVLS.

The polymerase complex is composed of four chains, the three other proteins of the complex (alpha, gamma, and delta chains) are supplied by the host cell.

It catalyses the reaction RNA(n) + a ribonucleoside 5'-triphosphate = RNA(n+1) + diphosphate. Functionally, this enzyme is part of the viral RNA-dependent RNA polymerase complex. The protein is RNA-directed RNA polymerase beta chain of Escherichia phage BZ13 (Bacteriophage BZ13).